The chain runs to 157 residues: 2-C-methyl-D-erythritol 2,4-cyclodiphosphate synthase (157 aa).

A divalent metal cation is bound by residues aspartate 8 and histidine 10. Residues 8–10 (DVH) and 34–35 (HS) contribute to the 4-CDP-2-C-methyl-D-erythritol 2-phosphate site. Histidine 42 is a binding site for a divalent metal cation. Residues 56 to 58 (DIG), 61 to 65 (FPDTD), 100 to 106 (AQAPKMA), 132 to 135 (TTTE), phenylalanine 139, and arginine 142 each bind 4-CDP-2-C-methyl-D-erythritol 2-phosphate.

Belongs to the IspF family. Homotrimer. Requires a divalent metal cation as cofactor.

The catalysed reaction is 4-CDP-2-C-methyl-D-erythritol 2-phosphate = 2-C-methyl-D-erythritol 2,4-cyclic diphosphate + CMP. The protein operates within isoprenoid biosynthesis; isopentenyl diphosphate biosynthesis via DXP pathway; isopentenyl diphosphate from 1-deoxy-D-xylulose 5-phosphate: step 4/6. Functionally, involved in the biosynthesis of isopentenyl diphosphate (IPP) and dimethylallyl diphosphate (DMAPP), two major building blocks of isoprenoid compounds. Catalyzes the conversion of 4-diphosphocytidyl-2-C-methyl-D-erythritol 2-phosphate (CDP-ME2P) to 2-C-methyl-D-erythritol 2,4-cyclodiphosphate (ME-CPP) with a corresponding release of cytidine 5-monophosphate (CMP). This chain is 2-C-methyl-D-erythritol 2,4-cyclodiphosphate synthase, found in Pseudomonas aeruginosa (strain ATCC 15692 / DSM 22644 / CIP 104116 / JCM 14847 / LMG 12228 / 1C / PRS 101 / PAO1).